The sequence spans 532 residues: Invertase 1 (532 aa).

Residues 1–19 (MLLQAFLFLLAGFAAKISA) form the signal peptide. N-linked (GlcNAc...) asparagine glycosylation is present at asparagine 23. Residues 39 to 42 (WMND) and glutamine 60 contribute to the substrate site. Aspartate 42 is a catalytic residue. A glycan (N-linked (GlcNAc...) asparagine) is linked at asparagine 64. 102–103 (YS) contacts substrate. N-linked (GlcNAc...) asparagine glycans are attached at residues asparagine 111, asparagine 112, asparagine 118, and asparagine 165. Substrate-binding positions include 170–171 (RD) and glutamate 223. N-linked (GlcNAc...) asparagine glycosylation is present at asparagine 275. Tryptophan 311 is a binding site for substrate. 5 N-linked (GlcNAc...) asparagine glycosylation sites follow: asparagine 356, asparagine 369, asparagine 384, asparagine 398, and asparagine 512.

This sequence belongs to the glycosyl hydrolase 32 family. Isoform Secreted is glycosylated. Isoform Intracellular is not glycosylated.

Its subcellular location is the cytoplasm. The protein localises to the secreted. The catalysed reaction is Hydrolysis of terminal non-reducing beta-D-fructofuranoside residues in beta-D-fructofuranosides.. This is Invertase 1 (SUC1) from Saccharomyces cerevisiae (Baker's yeast).